The following is a 164-amino-acid chain: Crossover junction endodeoxyribonuclease RuvC (164 aa).

Active-site residues include Asp-7, Glu-67, and Asp-140. Positions 7, 67, and 140 each coordinate Mg(2+).

The protein belongs to the RuvC family. As to quaternary structure, homodimer which binds Holliday junction (HJ) DNA. The HJ becomes 2-fold symmetrical on binding to RuvC with unstacked arms; it has a different conformation from HJ DNA in complex with RuvA. In the full resolvosome a probable DNA-RuvA(4)-RuvB(12)-RuvC(2) complex forms which resolves the HJ. Mg(2+) serves as cofactor.

It localises to the cytoplasm. It catalyses the reaction Endonucleolytic cleavage at a junction such as a reciprocal single-stranded crossover between two homologous DNA duplexes (Holliday junction).. The RuvA-RuvB-RuvC complex processes Holliday junction (HJ) DNA during genetic recombination and DNA repair. Endonuclease that resolves HJ intermediates. Cleaves cruciform DNA by making single-stranded nicks across the HJ at symmetrical positions within the homologous arms, yielding a 5'-phosphate and a 3'-hydroxyl group; requires a central core of homology in the junction. The consensus cleavage sequence is 5'-(A/T)TT(C/G)-3'. Cleavage occurs on the 3'-side of the TT dinucleotide at the point of strand exchange. HJ branch migration catalyzed by RuvA-RuvB allows RuvC to scan DNA until it finds its consensus sequence, where it cleaves and resolves the cruciform DNA. This Chloroflexus aurantiacus (strain ATCC 29364 / DSM 637 / Y-400-fl) protein is Crossover junction endodeoxyribonuclease RuvC.